The chain runs to 303 residues: Sulfate adenylyltransferase subunit 2 (303 aa).

Belongs to the PAPS reductase family. CysD subfamily. As to quaternary structure, heterodimer composed of CysD, the smaller subunit, and CysN.

The catalysed reaction is sulfate + ATP + H(+) = adenosine 5'-phosphosulfate + diphosphate. It participates in sulfur metabolism; hydrogen sulfide biosynthesis; sulfite from sulfate: step 1/3. Its function is as follows. With CysN forms the ATP sulfurylase (ATPS) that catalyzes the adenylation of sulfate producing adenosine 5'-phosphosulfate (APS) and diphosphate, the first enzymatic step in sulfur assimilation pathway. APS synthesis involves the formation of a high-energy phosphoric-sulfuric acid anhydride bond driven by GTP hydrolysis by CysN coupled to ATP hydrolysis by CysD. The chain is Sulfate adenylyltransferase subunit 2 from Phocaeicola vulgatus (strain ATCC 8482 / DSM 1447 / JCM 5826 / CCUG 4940 / NBRC 14291 / NCTC 11154) (Bacteroides vulgatus).